Consider the following 423-residue polypeptide: Serine--tRNA ligase (423 aa).

229 to 231 lines the L-serine pocket; that stretch reads TAE. 260–262 serves as a coordination point for ATP; it reads RKE. Glutamate 283 contributes to the L-serine binding site. 347-350 provides a ligand contact to ATP; that stretch reads EVSS. Serine 383 serves as a coordination point for L-serine.

The protein belongs to the class-II aminoacyl-tRNA synthetase family. Type-1 seryl-tRNA synthetase subfamily. In terms of assembly, homodimer. The tRNA molecule binds across the dimer.

The protein resides in the cytoplasm. It catalyses the reaction tRNA(Ser) + L-serine + ATP = L-seryl-tRNA(Ser) + AMP + diphosphate + H(+). The catalysed reaction is tRNA(Sec) + L-serine + ATP = L-seryl-tRNA(Sec) + AMP + diphosphate + H(+). Its pathway is aminoacyl-tRNA biosynthesis; selenocysteinyl-tRNA(Sec) biosynthesis; L-seryl-tRNA(Sec) from L-serine and tRNA(Sec): step 1/1. In terms of biological role, catalyzes the attachment of serine to tRNA(Ser). Is also able to aminoacylate tRNA(Sec) with serine, to form the misacylated tRNA L-seryl-tRNA(Sec), which will be further converted into selenocysteinyl-tRNA(Sec). This is Serine--tRNA ligase from Chloroflexus aurantiacus (strain ATCC 29366 / DSM 635 / J-10-fl).